A 980-amino-acid chain; its full sequence is Alanine--tRNA ligase, mitochondrial (980 aa).

The transit peptide at Met-1–Gln-23 directs the protein to the mitochondrion. ATP-binding positions include Arg-105, His-123, Trp-205, and Leu-235 to Asn-237. 2 residues coordinate L-alanine: Asn-237 and Asp-260. An ATP-binding site is contributed by Gly-264. Residues His-627, His-631, Cys-744, and His-748 each contribute to the Zn(2+) site.

Belongs to the class-II aminoacyl-tRNA synthetase family. Monomer. Requires Zn(2+) as cofactor.

It localises to the mitochondrion. It catalyses the reaction tRNA(Ala) + L-alanine + ATP = L-alanyl-tRNA(Ala) + AMP + diphosphate. The catalysed reaction is (S)-lactate + ATP + H(+) = (S)-lactoyl-AMP + diphosphate. The enzyme catalyses (S)-lactoyl-AMP + L-lysyl-[protein] = N(6)-[(S)-lactoyl]-L-lysyl-[protein] + AMP + 2 H(+). Its function is as follows. Catalyzes the attachment of alanine to tRNA(Ala) in a two-step reaction: alanine is first activated by ATP to form Ala-AMP and then transferred to the acceptor end of tRNA(Ala). Also edits incorrectly charged tRNA(Ala) via its editing domain. In presence of high levels of lactate, also acts as a protein lactyltransferase that mediates lactylation of lysine residues in target proteins, such as CGAS. Acts as an inhibitor of cGAS/STING signaling by catalyzing lactylation of CGAS, preventing the formation of liquid-like droplets in which CGAS is activated. This Mus musculus (Mouse) protein is Alanine--tRNA ligase, mitochondrial (Aars2).